Reading from the N-terminus, the 676-residue chain is Capsid vertex component 1 (676 aa).

A compositionally biased stretch (low complexity) spans 253 to 264 (HPVRPSSSRVAS). The tract at residues 253–308 (HPVRPSSSRVASGLLQSAKGHGAQTSNTDPINNGSFDGVLEPPGQGRFTGKKNNSS) is disordered. Polar residues predominate over residues 275 to 287 (AQTSNTDPINNGS).

It belongs to the herpesviridae CVC1 protein family. As to quaternary structure, interacts (via C-terminus) with capsid vertex component 2/CVC2.

It is found in the virion. The protein localises to the host nucleus. Its function is as follows. Capsid vertex-specific component that plays a role during viral DNA encapsidation, assuring correct genome cleavage and presumably stabilizing capsids that contain full-length viral genomes. This chain is Capsid vertex component 1, found in Varicella-zoster virus (strain Dumas) (HHV-3).